We begin with the raw amino-acid sequence, 251 residues long: MTSVCDATNEDKENGSESTESQDKEHPRVLIPELCRLFYQLGWVTGTGGGLSLRRGDQIYIAPSGVQKERLQPDDMFVCDVEERDISSPPPWKKLKKSQCTPLFMNAFTMRAAQAVIHTHSKAAVMATLFYPGKEFRITHQEMIKGIRKGTSSTNYRYDETLVVPIIENTPEERDLKERMALAMEQYPDSCAVLVRRHGVYVWGESWEKAKTMCECYDYLFDIAVQMKQSGMDPSAPPIEENHYYDVQQSQ.

Residues 1 to 26 (MTSVCDATNEDKENGSESTESQDKEH) form a disordered region. The span at 9-26 (NEDKENGSESTESQDKEH) shows a compositional bias: basic and acidic residues. Residue Cys-100 participates in substrate binding. Residues His-118 and His-120 each coordinate Zn(2+). Glu-142 functions as the Proton donor/acceptor in the catalytic mechanism. His-198 lines the Zn(2+) pocket. The segment at 232–251 (MDPSAPPIEENHYYDVQQSQ) is disordered.

Belongs to the aldolase class II family. MtnB subfamily. Requires Zn(2+) as cofactor.

The protein resides in the cytoplasm. The enzyme catalyses 5-(methylsulfanyl)-D-ribulose 1-phosphate = 5-methylsulfanyl-2,3-dioxopentyl phosphate + H2O. Its pathway is amino-acid biosynthesis; L-methionine biosynthesis via salvage pathway; L-methionine from S-methyl-5-thio-alpha-D-ribose 1-phosphate: step 2/6. Its function is as follows. Catalyzes the dehydration of methylthioribulose-1-phosphate (MTRu-1-P) into 2,3-diketo-5-methylthiopentyl-1-phosphate (DK-MTP-1-P). Functions in the methionine salvage pathway. May play a role in apoptosis. The chain is Methylthioribulose-1-phosphate dehydratase from Salmo salar (Atlantic salmon).